The primary structure comprises 99 residues: MTAKDKEALELRAQIQQHLVESGNYERISNKLAQRLLDEGWIDQVKKLTRETMEDDNTTNFSEVLKRVEPEAVSLVSANTKNEIMQQIKAFLCDILDTQ.

Belongs to the ENY2 family. In terms of assembly, component of the nuclear pore complex (NPC)-associated TREX-2 complex (transcription and export complex 2), composed of at least SUS1, SAC3, THP1, SEM1, and CDC31. TREX-2 contains 2 SUS1 chains. The TREX-2 complex interacts with the nucleoporin NUP1. Component of the 1.8 MDa SAGA transcription coactivator-HAT complex. SAGA is built of 5 distinct domains with specialized functions. Within the SAGA complex, SUS1, SGF11, SGF73 and UBP8 form an additional subcomplex of SAGA called the DUB module (deubiquitination module). Interacts directly with THP1, SAC3, SGF11, and with the RNA polymerase II.

It is found in the nucleus. The protein resides in the nucleoplasm. The protein localises to the cytoplasm. Its subcellular location is the P-body. Functionally, involved in mRNA export coupled transcription activation by association with both the TREX-2 and the SAGA complexes. At the promoters, SAGA is required for recruitment of the basal transcription machinery. It influences RNA polymerase II transcriptional activity through different activities such as TBP interaction and promoter selectivity, interaction with transcription activators, and chromatin modification through histone acetylation and deubiquitination. Within the SAGA complex, participates in a subcomplex required for deubiquitination of H2B and for the maintenance of steady-state H3 methylation levels. The TREX-2 complex functions in docking export-competent ribonucleoprotein particles (mRNPs) to the nuclear entrance of the nuclear pore complex (nuclear basket). TREX-2 participates in mRNA export and accurate chromatin positioning in the nucleus by tethering genes to the nuclear periphery. May also be involved in cytoplasmic mRNA decay by interaction with components of P-bodies. This Eremothecium gossypii (strain ATCC 10895 / CBS 109.51 / FGSC 9923 / NRRL Y-1056) (Yeast) protein is Transcription and mRNA export factor SUS1.